A 347-amino-acid chain; its full sequence is MGPDQEGLTYKAAGVDIDAGNELVDRIRDDVKRTMRPGVLGGLGGFGGLFEVPVDRYRRPVLVSGTDGVGTKLKLAIETGRHDGIGIDLVAMCANDVLVTGAEPLYFLDYYATGRLDVEVAAAVIRGIAEGCHQAGAALIGGETAEMPGMYAEGHYDLAGFCVGVVEKDEIIDGSRVGAGDALIALAASGPHSNGYSLIRKVLERAPEGAATEVDGQPVADLLMAPTRIYAKPVLDLIRNLPVHAMAHITGGGLPENLPRVLPEGLGAKLQPWSWPPVFRWLQQTGQIAEAEMLRTFNCGVGMVLVVPAEQADAALQRLRQTGETAWRLGEIGTHEAGAPRVQVVAA.

This sequence belongs to the AIR synthase family.

It localises to the cytoplasm. The catalysed reaction is 2-formamido-N(1)-(5-O-phospho-beta-D-ribosyl)acetamidine + ATP = 5-amino-1-(5-phospho-beta-D-ribosyl)imidazole + ADP + phosphate + H(+). Its pathway is purine metabolism; IMP biosynthesis via de novo pathway; 5-amino-1-(5-phospho-D-ribosyl)imidazole from N(2)-formyl-N(1)-(5-phospho-D-ribosyl)glycinamide: step 2/2. The sequence is that of Phosphoribosylformylglycinamidine cyclo-ligase from Alkalilimnicola ehrlichii (strain ATCC BAA-1101 / DSM 17681 / MLHE-1).